A 139-amino-acid polypeptide reads, in one-letter code: Cytochrome c-type biogenesis protein CcmE 2 (139 aa).

The Cytoplasmic segment spans residues 1–9 (MASLKKSRR). Residues 10–30 (VRLILFSGVALVSATALIGYA) form a helical; Signal-anchor for type II membrane protein membrane-spanning segment. Residues 31–139 (MRDGIQFFRT…ELAEMEALRD (109 aa)) lie on the Periplasmic side of the membrane. Heme contacts are provided by H122 and Y126.

Belongs to the CcmE/CycJ family.

It localises to the cell inner membrane. Functionally, heme chaperone required for the biogenesis of c-type cytochromes. Transiently binds heme delivered by CcmC and transfers the heme to apo-cytochromes in a process facilitated by CcmF and CcmH. The polypeptide is Cytochrome c-type biogenesis protein CcmE 2 (Ruegeria pomeroyi (strain ATCC 700808 / DSM 15171 / DSS-3) (Silicibacter pomeroyi)).